The following is a 339-amino-acid chain: Ribonucleoside-diphosphate reductase subunit beta (339 aa).

Residues Asp87 and His121 each coordinate Fe cation. The active site involves Tyr125. His215 lines the Fe cation pocket.

This sequence belongs to the ribonucleoside diphosphate reductase small chain family. In terms of assembly, tetramer of two alpha and two beta subunits. Requires Fe cation as cofactor.

It carries out the reaction a 2'-deoxyribonucleoside 5'-diphosphate + [thioredoxin]-disulfide + H2O = a ribonucleoside 5'-diphosphate + [thioredoxin]-dithiol. In terms of biological role, provides the precursors necessary for DNA synthesis. Catalyzes the biosynthesis of deoxyribonucleotides from the corresponding ribonucleotides. In Mycoplasmoides gallisepticum (strain R(low / passage 15 / clone 2)) (Mycoplasma gallisepticum), this protein is Ribonucleoside-diphosphate reductase subunit beta (nrdF).